We begin with the raw amino-acid sequence, 295 residues long: Bifunctional protein FolD (295 aa).

Residues 169 to 171 (GRS), Ser-194, and Ile-235 contribute to the NADP(+) site.

Belongs to the tetrahydrofolate dehydrogenase/cyclohydrolase family. Homodimer.

The catalysed reaction is (6R)-5,10-methylene-5,6,7,8-tetrahydrofolate + NADP(+) = (6R)-5,10-methenyltetrahydrofolate + NADPH. The enzyme catalyses (6R)-5,10-methenyltetrahydrofolate + H2O = (6R)-10-formyltetrahydrofolate + H(+). The protein operates within one-carbon metabolism; tetrahydrofolate interconversion. Catalyzes the oxidation of 5,10-methylenetetrahydrofolate to 5,10-methenyltetrahydrofolate and then the hydrolysis of 5,10-methenyltetrahydrofolate to 10-formyltetrahydrofolate. This chain is Bifunctional protein FolD, found in Acaryochloris marina (strain MBIC 11017).